A 685-amino-acid chain; its full sequence is Serine/threonine-protein kinase PLK2 (685 aa).

The interval 24–71 (KGCGADSKKKRPPQPPEESQPPQSQAQVPPAAAHHHHHHSHSGPEISR) is disordered. Residues 43–55 (QPPQSQAQVPPAA) are compositionally biased toward low complexity. The Protein kinase domain maps to 82–334 (YCRGKVLGKG…LDDIIRHDFF (253 aa)). ATP-binding positions include 88–96 (LGKGGFAKC) and Lys111. Asp205 serves as the catalytic Proton acceptor. Thr239 bears the Phosphothreonine mark. The disordered stretch occupies residues 406–433 (SITQQPSKHRTDEELQPPTTTVARSGTP). POLO box domains lie at 503-581 (WVTK…YMEE) and 601-685 (YLLQ…QRCN).

The protein belongs to the protein kinase superfamily. Ser/Thr protein kinase family. CDC5/Polo subfamily. Interacts with NSF; causing NSF dissociation from GRIA2. Interacts with CIB1. Catalytic activity is enhanced by phosphorylation of Thr-239.

It localises to the cytoplasm. The protein resides in the cytoskeleton. Its subcellular location is the microtubule organizing center. It is found in the centrosome. The protein localises to the centriole. It localises to the cell projection. The protein resides in the dendrite. The enzyme catalyses L-seryl-[protein] + ATP = O-phospho-L-seryl-[protein] + ADP + H(+). It catalyses the reaction L-threonyl-[protein] + ATP = O-phospho-L-threonyl-[protein] + ADP + H(+). With respect to regulation, activated by phosphorylation of Thr-239. Once activated, activity is stimulated by binding target proteins. Its function is as follows. Tumor suppressor serine/threonine-protein kinase involved in synaptic plasticity, centriole duplication and G1/S phase transition. Polo-like kinases act by binding and phosphorylating proteins that are already phosphorylated on a specific motif recognized by the POLO box domains. Phosphorylates CPAP, NPM1, RAPGEF2, RASGRF1, SNCA, SIPA1L1 and SYNGAP1. Plays a key role in synaptic plasticity and memory by regulating the Ras and Rap protein signaling: required for overactivity-dependent spine remodeling by phosphorylating the Ras activator RASGRF1 and the Rap inhibitor SIPA1L1 leading to their degradation by the proteasome. Conversely, phosphorylates the Rap activator RAPGEF2 and the Ras inhibitor SYNGAP1, promoting their activity. Also regulates synaptic plasticity independently of kinase activity, via its interaction with NSF that disrupts the interaction between NSF and the GRIA2 subunit of AMPARs, leading to a rapid rundown of AMPAR-mediated current that occludes long term depression. Required for procentriole formation and centriole duplication by phosphorylating CPAP and NPM1, respectively. Its induction by p53/TP53 suggests that it may participate in the mitotic checkpoint following stress. The polypeptide is Serine/threonine-protein kinase PLK2 (PLK2) (Pongo abelii (Sumatran orangutan)).